Consider the following 155-residue polypeptide: Ribosome maturation factor RimP (155 aa).

It belongs to the RimP family.

Its subcellular location is the cytoplasm. Its function is as follows. Required for maturation of 30S ribosomal subunits. This is Ribosome maturation factor RimP from Synechococcus sp. (strain CC9605).